We begin with the raw amino-acid sequence, 312 residues long: Glyoxylate/hydroxypyruvate reductase A (312 aa).

The active site involves Arg-227. The Proton donor role is filled by His-275.

The protein belongs to the D-isomer specific 2-hydroxyacid dehydrogenase family. GhrA subfamily.

Its subcellular location is the cytoplasm. It catalyses the reaction glycolate + NADP(+) = glyoxylate + NADPH + H(+). The enzyme catalyses (R)-glycerate + NAD(+) = 3-hydroxypyruvate + NADH + H(+). The catalysed reaction is (R)-glycerate + NADP(+) = 3-hydroxypyruvate + NADPH + H(+). Functionally, catalyzes the NADPH-dependent reduction of glyoxylate and hydroxypyruvate into glycolate and glycerate, respectively. Inactive towards 2-oxo-D-gluconate, 2-oxoglutarate, oxaloacetate and pyruvate. Only D- and L-glycerate are involved in the oxidative activity with NADP. Activity with NAD is very low. This Escherichia coli (strain K12) protein is Glyoxylate/hydroxypyruvate reductase A (ghrA).